A 384-amino-acid polypeptide reads, in one-letter code: MATNFTQELYEIGPMAYPLKMISKDVAEHMLGWNIPEEHQDLVHDHWRNFPAVSKYWHYVLALIYTMLMVTSLTGNGIVIWIFSTSKSLRSASNMFVINLAVFDLMMMLEMPLLIMNSFYQRLVGYQLGCDVYAVLGSLSGIGGAITNAVIAFDRYKTISSPLDGRINTVQAGLLIAFTWFWALPFTILPAFRIWGRFVPEGFLTTCSFDYFTEDQDTEVFVACIFVWSYCIPMALICYFYSQLFGAVRLHERMLQEQAKKMNVKSLASNKEDNSRSVEIRIAKVAFTIFFLFICAWTPYAFVTMTGAFGDRTLLTPIATMIPAVCCKVVSCIDPWVYAINHPRYRAELQKRLPWMGVREQDPDAVSTTTSVATAGFQPPAAEA.

The Extracellular portion of the chain corresponds to methionine 1–alanine 62. A glycan (N-linked (GlcNAc...) asparagine) is linked at asparagine 4. The helical transmembrane segment at leucine 63–phenylalanine 83 threads the bilayer. The Cytoplasmic segment spans residues serine 84–asparagine 94. Residues methionine 95–isoleucine 115 traverse the membrane as a helical segment. Topologically, residues methionine 116 to valine 132 are extracellular. A disulfide bridge links cysteine 130 with cysteine 207. A helical membrane pass occupies residues tyrosine 133–phenylalanine 153. Over aspartate 154–glutamine 171 the chain is Cytoplasmic. A helical membrane pass occupies residues alanine 172–phenylalanine 192. Topologically, residues arginine 193 to glutamate 219 are extracellular. Residues valine 220–phenylalanine 240 traverse the membrane as a helical segment. At tyrosine 241 to lysine 284 the chain is on the cytoplasmic side. Residues valine 285 to methionine 305 traverse the membrane as a helical segment. The Extracellular segment spans residues threonine 306 to arginine 312. Residues threonine 313 to isoleucine 333 traverse the membrane as a helical segment. At aspartate 334–alanine 384 the chain is on the cytoplasmic side.

This sequence belongs to the G-protein coupled receptor 1 family. Opsin subfamily. In the retina, expression is essentially uniformly distributed but a higher level is seen in the ventral region where the B-cells are localized.

The protein resides in the membrane. In terms of biological role, visual pigments are the light-absorbing molecules that mediate vision. They consist of an apoprotein, opsin, covalently linked to cis-retinal. May play a role in photoperiodic photoreception. This is Opsin-3 (OP3) from Manduca sexta (Tobacco hawkmoth).